The sequence spans 250 residues: Ribosomal RNA small subunit methyltransferase J (250 aa).

S-adenosyl-L-methionine contacts are provided by residues 96–97 (RD) and Asp168.

This sequence belongs to the methyltransferase superfamily. RsmJ family.

It localises to the cytoplasm. The catalysed reaction is guanosine(1516) in 16S rRNA + S-adenosyl-L-methionine = N(2)-methylguanosine(1516) in 16S rRNA + S-adenosyl-L-homocysteine + H(+). Its function is as follows. Specifically methylates the guanosine in position 1516 of 16S rRNA. The protein is Ribosomal RNA small subunit methyltransferase J of Neisseria meningitidis serogroup C / serotype 2a (strain ATCC 700532 / DSM 15464 / FAM18).